We begin with the raw amino-acid sequence, 474 residues long: Trigger factor (474 aa).

Positions 171–258 (GDVAVIDFQG…LKELKTRDLP (88 aa)) constitute a PPIase FKBP-type domain. The disordered stretch occupies residues 441–474 (TEVDAASATVETTATETAEEAPEAPKAKKGKKKA). Over residues 444 to 456 (DAASATVETTATE) the composition is skewed to low complexity.

It belongs to the FKBP-type PPIase family. Tig subfamily.

The protein localises to the cytoplasm. It catalyses the reaction [protein]-peptidylproline (omega=180) = [protein]-peptidylproline (omega=0). In terms of biological role, involved in protein export. Acts as a chaperone by maintaining the newly synthesized protein in an open conformation. Functions as a peptidyl-prolyl cis-trans isomerase. The sequence is that of Trigger factor from Synechococcus sp. (strain ATCC 27144 / PCC 6301 / SAUG 1402/1) (Anacystis nidulans).